A 721-amino-acid chain; its full sequence is Translation initiation factor eIF2B subunit epsilon (721 aa).

Residues 1 to 13 (MAAPVVAPPGVVV) show a composition bias toward low complexity. Positions 1–40 (MAAPVVAPPGVVVSRANKRSGAGPGGSGGGGARGAEEEPP) are disordered. The residue at position 2 (Ala-2) is an N-acetylalanine. Arg-19 is subject to Omega-N-methylarginine. A compositionally biased stretch (gly residues) spans 22–33 (AGPGGSGGGGAR). At Ser-27 the chain carries Phosphoserine. Residues Lys-61 and Lys-103 each participate in a glycyl lysine isopeptide (Lys-Gly) (interchain with G-Cter in ubiquitin) cross-link. At Ser-130 the chain carries Phosphoserine. Residues Lys-141 and Lys-217 each participate in a glycyl lysine isopeptide (Lys-Gly) (interchain with G-Cter in ubiquitin) cross-link. Thr-322 carries the post-translational modification Phosphothreonine. 2 disordered regions span residues 444–483 (PEGS…MKGY) and 523–547 (EESE…SPQM). Residues Ser-450, Ser-466, Ser-469, Ser-532, and Ser-540 each carry the phosphoserine modification. Composition is skewed to acidic residues over residues 456 to 471 (AEED…DSGA) and 523 to 537 (EESE…DSEE). One can recognise a W2 domain in the interval 543-720 (GSPQMDDIKV…KEAEEESSED (178 aa)). Ser-544 carries the post-translational modification Phosphoserine; by DYRK2. Ser-717 is subject to Phosphoserine.

Belongs to the eIF-2B gamma/epsilon subunits family. Component of the translation initiation factor 2B (eIF2B) complex which is a heterodecamer of two sets of five different subunits: alpha, beta, gamma, delta and epsilon. Subunits alpha, beta and delta comprise a regulatory subcomplex and subunits epsilon and gamma comprise a catalytic subcomplex. Within the complex, the hexameric regulatory complex resides at the center, with the two heterodimeric catalytic subcomplexes bound on opposite sides. Phosphorylated at Ser-544 by DYRK2; this is required for subsequent phosphorylation by GSK3B. Phosphorylated on serine and threonine residues by GSK3B; phosphorylation inhibits its function. Post-translationally, polyubiquitinated, probably by NEDD4.

It is found in the cytoplasm. The protein resides in the cytosol. Activated by the chemical integrated stress response (ISR) inhibitor ISRIB which stimulates guanine nucleotide exchange factor activity for both phosphorylated and unphosphorylated eIF2. Functionally, acts as a component of the translation initiation factor 2B (eIF2B) complex, which catalyzes the exchange of GDP for GTP on eukaryotic initiation factor 2 (eIF2) gamma subunit. Its guanine nucleotide exchange factor activity is repressed when bound to eIF2 complex phosphorylated on the alpha subunit, thereby limiting the amount of methionyl-initiator methionine tRNA available to the ribosome and consequently global translation is repressed. The chain is Translation initiation factor eIF2B subunit epsilon (EIF2B5) from Homo sapiens (Human).